The chain runs to 303 residues: Oxygen-dependent coproporphyrinogen-III oxidase (303 aa).

S93 serves as a coordination point for substrate. A divalent metal cation is bound by residues H97 and H107. H107 acts as the Proton donor in catalysis. 109–111 (NVR) is a binding site for substrate. 2 residues coordinate a divalent metal cation: H146 and H176. Residues 241-276 (YVEFNLVYDRGTLFGLQSGGRTESILMSLPPQVRWG) are important for dimerization. 259-261 (GGR) provides a ligand contact to substrate.

It belongs to the aerobic coproporphyrinogen-III oxidase family. Homodimer. A divalent metal cation is required as a cofactor.

Its subcellular location is the cytoplasm. The enzyme catalyses coproporphyrinogen III + O2 + 2 H(+) = protoporphyrinogen IX + 2 CO2 + 2 H2O. The protein operates within porphyrin-containing compound metabolism; protoporphyrin-IX biosynthesis; protoporphyrinogen-IX from coproporphyrinogen-III (O2 route): step 1/1. Its function is as follows. Involved in the heme biosynthesis. Catalyzes the aerobic oxidative decarboxylation of propionate groups of rings A and B of coproporphyrinogen-III to yield the vinyl groups in protoporphyrinogen-IX. This Pseudomonas putida (strain GB-1) protein is Oxygen-dependent coproporphyrinogen-III oxidase.